A 691-amino-acid chain; its full sequence is Capsid-associated protein VP80 (691 aa).

The tract at residues 416–466 is disordered; it reads SPVRKTSGKRSAEDDLLPTRSSKRANRPEINVISSEDEQEDDDVEDVDYEK. The segment covering 450 to 464 has biased composition (acidic residues); sequence SEDEQEDDDVEDVDY.

In terms of assembly, homodimer. Interacts with host nuclear F-actin.

It is found in the host nucleus. It localises to the virion. Structural protein that plays a role in the packaging of nucleocapsids and in their egress from the nucleus toward the cell periphery. This is Capsid-associated protein VP80 (VP80) from Autographa californica nuclear polyhedrosis virus (AcMNPV).